Here is a 541-residue protein sequence, read N- to C-terminus: MTVFNKFARTFKSHWLLYLCVIVFGITNLVASSGAHMVQRLLFFVLTILVVKRISSLPLRLLVAAPFVLLTAADMSISLYSWCTFGTTFNDGFAISVLQSDPDEVVKMLGMYIPYLCAFAFLSLLFLAVIIKYDVSLPTKKVTGILLLIVISGSLFSACQFAYKDAKNKKAFSPYILASRFATYTPFFNLNYFALAAKEHQRLLSIANTVPYFQLSVRDTGIDTYVLIVGESVRVDNMSLYGYTRSTTPQVEAQRKQIKLFNQAISGAPYTALSVPLSLTADSVLSHDIHNYPDNIINMANQAGFQTFWLSSQSAFRQNGTAVTSIAMRAMETVYVRGFDELLLPHLSQALQQNTQQKKLIVLHLNGSHEPACSAYPQSSAVFQPQDDQDACYDNSIHYTDSLLGQVFELLKDRRASVMYFADHGLERDPTKKNVYFHGGREASQQAYHVPMFIWYSPVLGDGVDRTTENNIFSTAYNNYLINAWMGVTKPEQPQTLEEVIAHYKGDSRVVDANHDVFDYVMLRKEFTEDKQGNPTPEGQG.

Residues 1–60 (MTVFNKFARTFKSHWLLYLCVIVFGITNLVASSGAHMVQRLLFFVLTILVVKRISSLPLR) are Periplasmic-facing. The chain crosses the membrane as a helical span at residues 61 to 81 (LLVAAPFVLLTAADMSISLYS). The Cytoplasmic segment spans residues 82-110 (WCTFGTTFNDGFAISVLQSDPDEVVKMLG). A helical transmembrane segment spans residues 111–131 (MYIPYLCAFAFLSLLFLAVII). At 132–141 (KYDVSLPTKK) the chain is on the periplasmic side. Residues 142-162 (VTGILLLIVISGSLFSACQFA) traverse the membrane as a helical segment. At 163–264 (YKDAKNKKAF…RKQIKLFNQA (102 aa)) the chain is on the cytoplasmic side. A helical transmembrane segment spans residues 265 to 285 (ISGAPYTALSVPLSLTADSVL). Residues 286–541 (SHDIHNYPDN…QGNPTPEGQG (256 aa)) are Periplasmic-facing.

This sequence belongs to the phosphoethanolamine transferase family.

Its subcellular location is the cell inner membrane. Probably does not transfer phosphoethanolamine to lipid A. This chain is Putative transferase YhbX (yhbX), found in Escherichia coli (strain K12).